A 364-amino-acid polypeptide reads, in one-letter code: Anthranilate phosphoribosyltransferase 1 (364 aa).

Residues Gly-102, 105-106 (GD), Thr-110, 112-115 (NIST), 130-138 (KHGNRSASS), and Ser-142 each bind 5-phospho-alpha-D-ribose 1-diphosphate. Gly-102 serves as a coordination point for anthranilate. Ser-114 is a Mg(2+) binding site. Residue Asn-133 participates in anthranilate binding. Arg-188 contacts anthranilate. Residues Asp-247 and Glu-248 each coordinate Mg(2+).

Belongs to the anthranilate phosphoribosyltransferase family. Homodimer. Mg(2+) serves as cofactor.

It carries out the reaction N-(5-phospho-beta-D-ribosyl)anthranilate + diphosphate = 5-phospho-alpha-D-ribose 1-diphosphate + anthranilate. The protein operates within amino-acid biosynthesis; L-tryptophan biosynthesis; L-tryptophan from chorismate: step 2/5. Catalyzes the transfer of the phosphoribosyl group of 5-phosphorylribose-1-pyrophosphate (PRPP) to anthranilate to yield N-(5'-phosphoribosyl)-anthranilate (PRA). This Nostoc sp. (strain PCC 7120 / SAG 25.82 / UTEX 2576) protein is Anthranilate phosphoribosyltransferase 1.